The chain runs to 436 residues: MFESKINPLWQSFILAVQEEVKPALGCTEPISLALAAAAAAAELDGTVERIDAWVSPNLMKNGMGVTVPGTGMVGLPIAAALGVLGGDAKAGLEVLKDASAKAVADAKAMLAAGHVAVMLQEPCNDILFSRAKVYSGDSWACVTIVGDHTNIVRIETDKGVVFTQADNAQEEEKTSPLGVLSHTSLEEILAFVNAVPFDAIRFILDAARLNGALSQEGLRGSWGLHIGSTLAKQCDRGLLAKDLSTAILIRTSAASDARMGGATLPAMSNSGSGNQGITATVPVMVVAEHVGADDERLARALMLSHLSAIYIHHQLPRLSALCAATTAAMGAAAGMAWLIDGRYDTIAMAISSMIGDVSGMICDGASNSCAMKVSTSASAAWKAVLMALDDTAVTGNEGIVAHNVEQSIANLCSLACRSMQQTDKQIIEIMASKAH.

This sequence belongs to the UPF0597 family.

This is UPF0597 protein YhaM from Salmonella paratyphi C (strain RKS4594).